We begin with the raw amino-acid sequence, 128 residues long: Aspartate 1-decarboxylase (128 aa).

S25 (schiff-base intermediate with substrate; via pyruvic acid) is an active-site residue. Pyruvic acid (Ser) is present on S25. T57 serves as a coordination point for substrate. Residue Y58 is the Proton donor of the active site. Position 73–75 (73–75 (GSA)) interacts with substrate.

The protein belongs to the PanD family. In terms of assembly, heterooctamer of four alpha and four beta subunits. Pyruvate is required as a cofactor. In terms of processing, is synthesized initially as an inactive proenzyme, which is activated by self-cleavage at a specific serine bond to produce a beta-subunit with a hydroxyl group at its C-terminus and an alpha-subunit with a pyruvoyl group at its N-terminus.

It localises to the cytoplasm. It carries out the reaction L-aspartate + H(+) = beta-alanine + CO2. It functions in the pathway cofactor biosynthesis; (R)-pantothenate biosynthesis; beta-alanine from L-aspartate: step 1/1. Its function is as follows. Catalyzes the pyruvoyl-dependent decarboxylation of aspartate to produce beta-alanine. This is Aspartate 1-decarboxylase from Burkholderia multivorans (strain ATCC 17616 / 249).